Here is a 660-residue protein sequence, read N- to C-terminus: Translation factor GUF1 homolog, mitochondrial (660 aa).

A tr-type G domain is found at Glu-62 to Thr-243. Residues Ala-71–Ser-78, Asp-136–His-140, and Asn-190–Asp-193 contribute to the GTP site.

This sequence belongs to the TRAFAC class translation factor GTPase superfamily. Classic translation factor GTPase family. LepA subfamily.

It localises to the mitochondrion inner membrane. The enzyme catalyses GTP + H2O = GDP + phosphate + H(+). In terms of biological role, promotes mitochondrial protein synthesis. May act as a fidelity factor of the translation reaction, by catalyzing a one-codon backward translocation of tRNAs on improperly translocated ribosomes. Binds to mitochondrial ribosomes in a GTP-dependent manner. This is Translation factor GUF1 homolog, mitochondrial from Trichoplax adhaerens (Trichoplax reptans).